An 815-amino-acid chain; its full sequence is MGNSPSTQDPSHSTKKEHGHHFHDAFNKDRQGSITSQLFNNRKSTHKRRASHTSEHNGAIPPRMQLLASHDPSTDCDGRMSSDTTIDKGPSHLFKKDYSLSSAADVNDTTLANLTLSDDHDVGAPEEQVKSPSFLSPGPSMATVKRTKSDLDDLSTLNYTMVDETTENERNGKPHHERHRSSIIALKKNLLESSATASPSPTRSSSVHSASLPALTKTDSIDIPVRQPYSKKPSIHAYQYQYLNNDETFSENSQMDKEGNSDSVDAEAGVLQSEDMVLNQSLLQNALKKDMQRLSRVNSSNSMYTAERISHANNNGNIENNTRNKGNAGGSNDDFTAPISATAKMMMKLYGDKTLMERDLNKHHNKTKKAQSKKIRSASNSRRSSFASLHSLQSRKSILTNGLNLQPLHPLHPIINDNESQYSAPQHREISHHSNSMSSMSSISSTNSTENTLVVLKWKDDGTVAATTEVFIVSTDIASALKEQRELTLDENASLDSEKQLNPRIRMVYDDVHKEWFVPDLFLPAGIYRLQFSINGILTHSNFLPTATDSEGNFVNWFEVLPGYHTIEPFRNEADIDSQVEPTLDEELPKRPELKRFPSSSRKSSYYSAKGVERPSTPFSDYRGLSRSSSINMRDSFVRLKASSLDLMAEVKPERLVYSNEIPNLFNIGDGSTISVKGDSDDVHPQEPPSFTHRVVDCNQDDLFATLQQGGNIDAETAEAVFLSRYPVPDLPIYLNSSYLNRILNQSNQNSESHERDEGAINHIIPHVNLNHLLTSSIRDEIISVACTTRYEGKFITQVVYAPCYYKTQKSQISN.

Over residues methionine 1–serine 11 the composition is skewed to polar residues. 2 disordered regions span residues methionine 1 to lysine 88 and histidine 120 to arginine 146. The N-myristoyl glycine moiety is linked to residue glycine 2. The segment covering histidine 12–glutamine 31 has biased composition (basic and acidic residues). A compositionally biased stretch (polar residues) spans glycine 32–arginine 42. A Phosphoserine modification is found at serine 33. Basic and acidic residues-rich tracts occupy residues proline 72 to lysine 88 and histidine 120 to valine 129. A phosphoserine mark is found at serine 181, serine 198, serine 200, serine 206, serine 209, and serine 220. Disordered regions lie at residues histidine 311–phenylalanine 335, histidine 363–leucine 389, and proline 410–serine 444. Residues asparagine 313–glycine 326 show a composition bias toward low complexity. Serine 331 is modified (phosphoserine). The span at histidine 363–arginine 376 shows a compositional bias: basic residues. Low complexity-rich tracts occupy residues serine 377 to leucine 389 and histidine 433 to serine 444. Residues valine 473–glutamate 716 form a kinase-interacting sequence (KIS); required for interaction with SNF1 region. Phosphoserine occurs at positions 494 and 497. The interval glutamate 581–serine 616 is disordered. A compositionally biased stretch (basic and acidic residues) spans glutamate 587–arginine 596. The span at serine 599–serine 608 shows a compositional bias: low complexity. At serine 643 the chain carries Phosphoserine. The association with SNF1 kinase complex (ASC) domain; required for interaction with SNF4 stretch occupies residues serine 724–cysteine 804.

The protein belongs to the 5'-AMP-activated protein kinase beta subunit family. As to quaternary structure, component of the SNF1 kinase complex, a heterotrimeric complex composed of the catalytic alpha subunit SNF1, one of the three related beta subunits SIP1, SIP2 or GAL83, and the regulatory gamma subunit SNF4. The beta subunit serves as a bridge between the catalytic and the regulatory subunit. Interacts (via KIS domain) with SNF1. Interacts (via ASC domain) with SNF4. Phosphorylated by SNF1 in vitro.

The protein localises to the cytoplasm. It localises to the vacuole membrane. Beta subunit of the SNF1 kinase complex, which is required for transcriptional, metabolic, and developmental adaptations in response to glucose limitation. Has a structural role, mediating heterotrimer formation, and a regulatory role, defining carbon source-regulated subcellular location and substrate specificity of the SNF1 kinase complex. Promotes the PKA-regulated relocalization of the SNF1 kinase complex to the vacuolar membrane in response to various types of carbon stress. This chain is SNF1 protein kinase subunit beta-1 (SIP1), found in Saccharomyces cerevisiae (strain RM11-1a) (Baker's yeast).